The primary structure comprises 199 residues: Lipid A acyltransferase PagP (199 aa).

Residues 1–25 (MNYKDIINACILSGVFLLHSPSALA) form the signal peptide. Residues H74, D117, and S118 contribute to the active site.

This sequence belongs to the lipid A palmitoyltransferase family. Homodimer.

It is found in the cell outer membrane. It catalyses the reaction a lipid A + a 1,2-diacyl-sn-glycero-3-phosphocholine = a hepta-acyl lipid A + a 2-acyl-sn-glycero-3-phosphocholine. It carries out the reaction a lipid IVA + a 1,2-diacyl-sn-glycero-3-phosphocholine = a lipid IVB + a 2-acyl-sn-glycero-3-phosphocholine. The catalysed reaction is a lipid IIA + a 1,2-diacyl-sn-glycero-3-phosphocholine = a lipid IIB + a 2-acyl-sn-glycero-3-phosphocholine. In terms of biological role, transfers a fatty acid residue from the sn-1 position of a phospholipid to the N-linked hydroxyfatty acid chain on the proximal unit of lipid A or its precursors. This is Lipid A acyltransferase PagP from Yersinia pestis bv. Antiqua (strain Antiqua).